The following is a 431-amino-acid chain: Probable glucarate dehydratase (431 aa).

Substrate is bound by residues His-29, Thr-108, Tyr-153, and Lys-198. Lys-200 (proton acceptor) is an active-site residue. Residues Asp-228 and Asn-276 each coordinate Mg(2+). Residues 228 to 230, Asn-276, 327 to 329, His-356, and Arg-410 contribute to the substrate site; these read DPN and HSN. His-327 serves as the catalytic Proton acceptor.

It belongs to the mandelate racemase/muconate lactonizing enzyme family. GlucD subfamily. Mg(2+) is required as a cofactor.

The enzyme catalyses D-glucarate = 5-dehydro-4-deoxy-D-glucarate + H2O. It participates in carbohydrate acid metabolism; D-glucarate degradation; 2,5-dioxopentanoate from D-glucarate: step 1/2. Its function is as follows. Catalyzes the dehydration of glucarate to 5-keto-4-deoxy-D-glucarate (5-kdGluc). The polypeptide is Probable glucarate dehydratase (gudD) (Streptomyces coelicolor (strain ATCC BAA-471 / A3(2) / M145)).